The sequence spans 510 residues: Protein ERGIC-53 (510 aa).

The signal sequence occupies residues 1-30 (MAGSRRRGLQARVRPLFCALLLSLSRFVGG). Residues 31–477 (DGVGGDPAAG…ELPPFPSCLS (447 aa)) lie on the Lumenal side of the membrane. One can recognise an L-type lectin-like domain in the interval 44 to 267 (RRFEYKYSFK…DVLSFLTFQL (224 aa)). Positions 88 and 121 each coordinate a carbohydrate. Residues Asp-152, Phe-154, and Asn-156 each coordinate Ca(2+). Asn-156 and His-178 together coordinate a carbohydrate. Asp-181 provides a ligand contact to Ca(2+). A disulfide bridge connects residues Cys-190 and Cys-230. Position 251–253 (251–253 (GGL)) interacts with a carbohydrate. Residue Ser-425 is modified to Phosphoserine. The helical transmembrane segment at 478–498 (TVHFIIFVVVQTVLFIGYIMY) threads the bilayer. Topologically, residues 499-510 (RSQQEAAAKKFF) are cytoplasmic. Positions 499-510 (RSQQEAAAKKFF) are mediates interaction with RAB3GAP1, RAB3GAP2 and UBXN6. The ER export motif motif lies at 509–510 (FF).

Exists both as a covalent disulfide-linked homohexamer, and a complex of three disulfide-linked dimers non-covalently kept together. Interacts with MCFD2. May interact with TMEM115. Interacts with RAB3GAP1 and RAB3GAP2. Interacts with UBXN6. Interacts with SERPINA1/alpha1-antitrypsin. Interacts with BET1.

The protein localises to the endoplasmic reticulum-Golgi intermediate compartment membrane. The protein resides in the golgi apparatus membrane. Its subcellular location is the endoplasmic reticulum membrane. Mannose-specific lectin. May recognize sugar residues of glycoproteins, glycolipids, or glycosylphosphatidyl inositol anchors and may be involved in the sorting or recycling of proteins, lipids, or both. The LMAN1-MCFD2 complex forms a specific cargo receptor for the ER-to-Golgi transport of selected proteins. The protein is Protein ERGIC-53 (LMAN1) of Chlorocebus aethiops (Green monkey).